A 275-amino-acid chain; its full sequence is 4-hydroxy-3-methylbut-2-enyl diphosphate reductase (275 aa).

Residue Cys-12 participates in [4Fe-4S] cluster binding. His-40 and His-70 together coordinate (2E)-4-hydroxy-3-methylbut-2-enyl diphosphate. 2 residues coordinate dimethylallyl diphosphate: His-40 and His-70. The isopentenyl diphosphate site is built by His-40 and His-70. Residue Cys-92 coordinates [4Fe-4S] cluster. His-119 is a (2E)-4-hydroxy-3-methylbut-2-enyl diphosphate binding site. His-119 contacts dimethylallyl diphosphate. His-119 contacts isopentenyl diphosphate. The Proton donor role is filled by Glu-121. Residue Thr-151 participates in (2E)-4-hydroxy-3-methylbut-2-enyl diphosphate binding. Cys-181 provides a ligand contact to [4Fe-4S] cluster. (2E)-4-hydroxy-3-methylbut-2-enyl diphosphate contacts are provided by Ser-209, Ser-210, Asn-211, and Ser-251. Ser-209, Ser-210, Asn-211, and Ser-251 together coordinate dimethylallyl diphosphate. Isopentenyl diphosphate-binding residues include Ser-209, Ser-210, Asn-211, and Ser-251.

It belongs to the IspH family. [4Fe-4S] cluster is required as a cofactor.

The enzyme catalyses isopentenyl diphosphate + 2 oxidized [2Fe-2S]-[ferredoxin] + H2O = (2E)-4-hydroxy-3-methylbut-2-enyl diphosphate + 2 reduced [2Fe-2S]-[ferredoxin] + 2 H(+). The catalysed reaction is dimethylallyl diphosphate + 2 oxidized [2Fe-2S]-[ferredoxin] + H2O = (2E)-4-hydroxy-3-methylbut-2-enyl diphosphate + 2 reduced [2Fe-2S]-[ferredoxin] + 2 H(+). It participates in isoprenoid biosynthesis; dimethylallyl diphosphate biosynthesis; dimethylallyl diphosphate from (2E)-4-hydroxy-3-methylbutenyl diphosphate: step 1/1. Its pathway is isoprenoid biosynthesis; isopentenyl diphosphate biosynthesis via DXP pathway; isopentenyl diphosphate from 1-deoxy-D-xylulose 5-phosphate: step 6/6. Catalyzes the conversion of 1-hydroxy-2-methyl-2-(E)-butenyl 4-diphosphate (HMBPP) into a mixture of isopentenyl diphosphate (IPP) and dimethylallyl diphosphate (DMAPP). Acts in the terminal step of the DOXP/MEP pathway for isoprenoid precursor biosynthesis. The sequence is that of 4-hydroxy-3-methylbut-2-enyl diphosphate reductase from Thermotoga sp. (strain RQ2).